Here is a 739-residue protein sequence, read N- to C-terminus: Catalase-peroxidase (739 aa).

The first 23 residues, 1–23 (MLKKIVTALGMSGMLLASNSAIA), serve as a signal peptide directing secretion. A cross-link (tryptophyl-tyrosyl-methioninium (Trp-Tyr) (with M-247)) is located at residues 100–221 (WHDAGTYRIY…YAATQMGLIY (122 aa)). The Proton acceptor role is filled by His-101. The tryptophyl-tyrosyl-methioninium (Tyr-Met) (with W-100) cross-link spans 221-247 (YVNPEGPDGKPDIKGAASEIRQAFRAM). His-262 is a heme b binding site.

This sequence belongs to the peroxidase family. Peroxidase/catalase subfamily. As to quaternary structure, homodimer or homotetramer. Requires heme b as cofactor. Post-translationally, formation of the three residue Trp-Tyr-Met cross-link is important for the catalase, but not the peroxidase activity of the enzyme.

The enzyme catalyses H2O2 + AH2 = A + 2 H2O. The catalysed reaction is 2 H2O2 = O2 + 2 H2O. Its function is as follows. Bifunctional enzyme with both catalase and broad-spectrum peroxidase activity. The protein is Catalase-peroxidase of Francisella tularensis subsp. novicida (strain U112).